The following is a 356-amino-acid chain: Histidinol-phosphate aminotransferase (356 aa).

K210 carries the N6-(pyridoxal phosphate)lysine modification.

Belongs to the class-II pyridoxal-phosphate-dependent aminotransferase family. Histidinol-phosphate aminotransferase subfamily. Homodimer. It depends on pyridoxal 5'-phosphate as a cofactor.

The catalysed reaction is L-histidinol phosphate + 2-oxoglutarate = 3-(imidazol-4-yl)-2-oxopropyl phosphate + L-glutamate. It functions in the pathway amino-acid biosynthesis; L-histidine biosynthesis; L-histidine from 5-phospho-alpha-D-ribose 1-diphosphate: step 7/9. The chain is Histidinol-phosphate aminotransferase (hisC) from Acetobacter pasteurianus (Acetobacter turbidans).